Consider the following 389-residue polypeptide: Lipid-A-disaccharide synthase (389 aa).

It belongs to the LpxB family.

It catalyses the reaction a lipid X + a UDP-2-N,3-O-bis[(3R)-3-hydroxyacyl]-alpha-D-glucosamine = a lipid A disaccharide + UDP + H(+). It participates in bacterial outer membrane biogenesis; LPS lipid A biosynthesis. Functionally, condensation of UDP-2,3-diacylglucosamine and 2,3-diacylglucosamine-1-phosphate to form lipid A disaccharide, a precursor of lipid A, a phosphorylated glycolipid that anchors the lipopolysaccharide to the outer membrane of the cell. The sequence is that of Lipid-A-disaccharide synthase from Burkholderia orbicola (strain MC0-3).